We begin with the raw amino-acid sequence, 497 residues long: MORN repeat-containing protein 1 (497 aa).

The segment at 1–27 (MAAAGEGTPSSRGPRRDPPRRPPRNGY) is disordered. MORN repeat units lie at residues 39-61 (YEGE…DGSY), 62-84 (YEGA…WSGD), 86-108 (FSGQ…AGGC), 109-131 (YEGE…DGQV), 132-154 (YQGS…NGDK), 155-177 (YDGD…DGST), and 178-200 (YKGQ…SGVT). Disordered regions lie at residues 393–425 (GGRS…ATEE) and 468–497 (QPPH…PAPR).

The protein is MORN repeat-containing protein 1 (MORN1) of Homo sapiens (Human).